Here is a 991-residue protein sequence, read N- to C-terminus: Collagenase ColT (991 aa).

Residues 1–28 (MKKKFIKMLCSIAIGCMISTSYSIKVSA) form the signal peptide. The propeptide occupies 29–52 (FSNGNTKTNPNGEFKSLSLNSTNP). The S1 metalloprotease domain, degrades FALGPA (furylacryloyl-Leu-Gly-Pro-Ala) stretch occupies residues 53-727 (YKTKYSFNDL…VYDIVFHGLL (675 aa)). The segment at 57 to 330 (YSFNDLNKLS…AIEAIKEDFN (274 aa)) is activator domain. The segment at 340–611 (DINKLIEEGK…MENLVNNYDN (272 aa)) is catalytic subdomain. Glutamate 440 is a binding site for Ca(2+). Histidine 465 serves as a coordination point for Zn(2+). Residue glutamate 466 is part of the active site. Histidine 469 provides a ligand contact to Zn(2+). Ca(2+) contacts are provided by glycine 473, isoleucine 477, and glycine 479. Residue glutamate 499 participates in Zn(2+) binding. Residues 619-731 (DDYMKQYDNK…VFHGLLSHNK (113 aa)) form a helper subdomain region. Collagen-binding domain stretches follow at residues 755–870 (IYEK…NISD) and 878–991 (IKKI…VIIN). 11 residues coordinate Ca(2+): glutamate 757, glutamate 759, asparagine 761, aspartate 784, aspartate 787, glutamate 883, glutamate 885, asparagine 887, aspartate 888, aspartate 910, and aspartate 913.

Belongs to the peptidase M9B family. Collagenase subfamily. Ca(2+) serves as cofactor. Zn(2+) is required as a cofactor.

It localises to the secreted. It carries out the reaction Digestion of native collagen in the triple helical region at Xaa-|-Gly bonds. With synthetic peptides, a preference is shown for Gly at P3 and P1', Pro and Ala at P2 and P2', and hydroxyproline, Ala or Arg at P3'.. Partially inhibited by 1-10-phenanthroline; inactivation is irreversible. Partially inhibited by EDTA; inactivation is reversible. Inhibited by broad-spectrum zinc metalloprotease inhibitor batimastat. N-aryl mercaptoacetamide-based inhibitors have been isolated that act on clostridial collagenases with submicromolar affinity while having negligibile activity on human collagenases. Functionally, clostridial collagenases are among the most efficient degraders of eukaryotic collagen known; saprophytes use collagen as a carbon source while pathogens additionally digest collagen to aid in host colonization. Has both tripeptidylcarboxypeptidase on Gly-X-Y and endopeptidase activities; the endopeptidase cuts within the triple helix region of collagen while tripeptidylcarboxypeptidase successively digests the exposed ends, thus clostridial collagenases can digest large sections of collagen. The activator domain (residues 57-330) and catalytic subdomain (340-611) open and close around substrate allowing digestion when the protein is closed. This is Collagenase ColT from Clostridium tetani (strain Massachusetts / E88).